The following is a 273-amino-acid chain: tRNA pseudouridine synthase B (273 aa).

Asp38 (nucleophile) is an active-site residue.

Belongs to the pseudouridine synthase TruB family. Type 1 subfamily.

The catalysed reaction is uridine(55) in tRNA = pseudouridine(55) in tRNA. In terms of biological role, responsible for synthesis of pseudouridine from uracil-55 in the psi GC loop of transfer RNAs. This Sulfurimonas denitrificans (strain ATCC 33889 / DSM 1251) (Thiomicrospira denitrificans (strain ATCC 33889 / DSM 1251)) protein is tRNA pseudouridine synthase B.